A 611-amino-acid polypeptide reads, in one-letter code: Calmegin (611 aa).

The N-terminal stretch at 1–19 is a signal peptide; the sequence is MRFQGVGLCLGLLFITVNA. Residues 20-471 are Lumenal-facing; sequence DFMDDGVEVE…LVIAAEERPW (452 aa). Position 128 is an N6-acetyllysine (K128). C151 and C185 are oxidised to a cystine. The tract at residues 254 to 335 is disordered; sequence LDDVVPPINP…KAEKPEDWSD (82 aa). A compositionally biased stretch (basic and acidic residues) spans 265-284; sequence REIDDPSDKKPEEWDDRAKI. 8 repeat units span residues 267 to 280, 284 to 297, 303 to 316, 322 to 335, 339 to 352, 356 to 369, 370 to 383, and 384 to 397. The tract at residues 317-350 is interaction with PPIB; the sequence is DEPKFIPNPKAEKPEDWSDDMDGEWEAPHIPNPA. C351 and C355 are oxidised to a cystine. The chain crosses the membrane as a helical span at residues 472 to 492; the sequence is LWLMYLVMAGLPVALVASFCW. Residues 493 to 611 lie on the Cytoplasmic side of the membrane; that stretch reads PRKVKKKYED…SLRKRRVRKD (119 aa). The segment at 517–611 is disordered; it reads AALEQEAEEE…SLRKRRVRKD (95 aa). The segment covering 526–584 has biased composition (basic and acidic residues); it reads EKAPEKPEDVQEEKKPGEAEVVTVEKEVIGEPEEKSKEDRETLEGQEEVSKLSKSGSED. Phosphoserine occurs at positions 561, 578, 580, 582, 592, 595, and 602. Basic residues predominate over residues 602 to 611; that stretch reads SLRKRRVRKD.

This sequence belongs to the calreticulin family. Interacts with PDILT and PPIB. Interacts with ADAM2. Interacts with ADAM1A, ADAM1B and ADAM3; these are protein-coding genes in mouse but may be pseudogenes in other organisms. As to expression, detected in testis (at protein level). Detected in testis.

The protein localises to the endoplasmic reticulum membrane. Functionally, functions during spermatogenesis as a chaperone for a range of client proteins that are important for sperm adhesion onto the egg zona pellucida and for subsequent penetration of the zona pellucida. Required for normal sperm migration from the uterus into the oviduct. Required for normal male fertility. Binds calcium ions. This Mus musculus (Mouse) protein is Calmegin (Clgn).